Here is a 462-residue protein sequence, read N- to C-terminus: uncharacterized protein (462 aa).

The HTH gntR-type domain occupies 22–90 (KPIYKALAGQ…VGSGTFVSYD (69 aa)). A DNA-binding region (H-T-H motif) is located at residues 50–69 (QRELADYLDLNVSTISKAFK). Lys308 carries the post-translational modification N6-(pyridoxal phosphate)lysine.

In the C-terminal section; belongs to the class-I pyridoxal-phosphate-dependent aminotransferase family. It depends on pyridoxal 5'-phosphate as a cofactor.

This is an uncharacterized protein from Bacillus subtilis (strain 168).